A 375-amino-acid chain; its full sequence is MGYCQGVSQVAVVLLMFPKEKEAFLALAQLLTSKNLPDTVDGQLPMGPHSRASQVAPETTSSKVDRGVSTVCGKPKVVGKIYGGRDAAAGQWPWQASLLYWGSHLCGAVLIDSCWLVSTTHCFLNKSQAPKNYQVLLGNIQLYHQTQHTQKMSVHRIITHPDFEKLHPFGSDIAMLQLHLPMNFTSYIVPVCLPSRDMQLPSNVSCWITGWGMLTEDHKRGPVHTAVPSRLQAVCCSGCRGQRVGSRVGRFRSMIVHSEGQLRSLMPGDFHLGDSGGPLVCYLPSAWVLVGLASWGLDCRHPAYPSIFTRVTYFINWIDEIMRLTPLSDPALAPHTCSPPKPLRAAGLPGPCAALVLPQTWLLLPLTLRAPWQTL.

An N-terminal signal peptide occupies residues 1–23 (MGYCQGVSQVAVVLLMFPKEKEA). The tract at residues 41–60 (DGQLPMGPHSRASQVAPETT) is disordered. Polar residues predominate over residues 51-60 (RASQVAPETT). The region spanning 81–323 (IYGGRDAAAG…FINWIDEIMR (243 aa)) is the Peptidase S1 domain. The cysteines at positions 106 and 122 are disulfide-linked. Catalysis depends on charge relay system residues histidine 121 and aspartate 172. N-linked (GlcNAc...) asparagine glycosylation is found at asparagine 183 and asparagine 203. Residues cysteine 206 and cysteine 281 are joined by a disulfide bond. Serine 275 acts as the Charge relay system in catalysis.

Belongs to the peptidase S1 family.

The protein resides in the secreted. The sequence is that of Putative serine protease 47 (PRSS47P) from Homo sapiens (Human).